Here is a 181-residue protein sequence, read N- to C-terminus: Protein TrbB (181 aa).

Residues 1–22 form the signal peptide; the sequence is MSLTKSLLFTLLLSAAAVQAST. The Thioredoxin domain maps to 37 to 172; sequence TQPAQPAAGT…FMARVDTVLQ (136 aa).

It is found in the periplasm. This chain is Protein TrbB (trbB), found in Escherichia coli (strain K12).